Reading from the N-terminus, the 664-residue chain is Kinesin-like protein KIF2B (664 aa).

Residue Thr125 is modified to Phosphothreonine; by PLK1. Positions 149–177 (CLREIEKLQKQREKRRRLQLEIRARRALD) form a coiled coil. Phosphoserine; by PLK1 is present on Ser204. The region spanning 213–543 (RICVCVRKRP…LRYANRVKEL (331 aa)) is the Kinesin motor domain. 303–310 (GQTGSGKT) serves as a coordination point for ATP. A disordered region spans residues 583–607 (VQKEEEKESDELTSTKEPAASWSRS). The stretch at 642 to 663 (VLTEIQKKLQLLRDDLQKKSQA) forms a coiled coil.

Belongs to the TRAFAC class myosin-kinesin ATPase superfamily. Kinesin family. MCAK/KIF2 subfamily. Phosphorylation at Thr-125 by PLK1 is required for activity in the correction of kinetochore-microtubules attachment errors, while phosphorylation at Ser-204 also by PLK1 is required for the kinetochore localization and activity in prometaphase.

It is found in the cytoplasm. The protein localises to the cytoskeleton. It localises to the microtubule organizing center. The protein resides in the centrosome. Its subcellular location is the spindle. It is found in the chromosome. The protein localises to the centromere. It localises to the kinetochore. Plus end-directed microtubule-dependent motor required for spindle assembly and chromosome movement. Has microtubule depolymerization activity. Plays a role in chromosome congression. This chain is Kinesin-like protein KIF2B, found in Rattus norvegicus (Rat).